Here is a 96-residue protein sequence, read N- to C-terminus: Large ribosomal subunit protein uL23 (96 aa).

The protein belongs to the universal ribosomal protein uL23 family. In terms of assembly, part of the 50S ribosomal subunit. Contacts protein L29, and trigger factor when it is bound to the ribosome.

Functionally, one of the early assembly proteins it binds 23S rRNA. One of the proteins that surrounds the polypeptide exit tunnel on the outside of the ribosome. Forms the main docking site for trigger factor binding to the ribosome. The chain is Large ribosomal subunit protein uL23 from Clostridioides difficile (strain 630) (Peptoclostridium difficile).